A 156-amino-acid polypeptide reads, in one-letter code: MPRRRIIGQRKILPDPKFSSELLAKFINILMINGKKSIAENIVYSALHQLSIKVKKKELDIFIAALDNVKPVVEVKSRRVGGSTYQVPVEVRPVRRNALAMRWIIDAARKRIDRSMSIRLTNELLDALENKGAAVRKREEVHKMADANKAFAHYRW.

The protein belongs to the universal ribosomal protein uS7 family. As to quaternary structure, part of the 30S ribosomal subunit. Contacts proteins S9 and S11.

In terms of biological role, one of the primary rRNA binding proteins, it binds directly to 16S rRNA where it nucleates assembly of the head domain of the 30S subunit. Is located at the subunit interface close to the decoding center, probably blocks exit of the E-site tRNA. The sequence is that of Small ribosomal subunit protein uS7 from Buchnera aphidicola subsp. Cinara cedri (strain Cc).